The following is a 631-amino-acid chain: DNA mismatch repair protein MutL (631 aa).

It belongs to the DNA mismatch repair MutL/HexB family.

This protein is involved in the repair of mismatches in DNA. It is required for dam-dependent methyl-directed DNA mismatch repair. May act as a 'molecular matchmaker', a protein that promotes the formation of a stable complex between two or more DNA-binding proteins in an ATP-dependent manner without itself being part of a final effector complex. This Lactobacillus acidophilus (strain ATCC 700396 / NCK56 / N2 / NCFM) protein is DNA mismatch repair protein MutL.